A 924-amino-acid polypeptide reads, in one-letter code: Protein argonaute 4 (924 aa).

Disordered regions lie at residues Met1–Val37 and Thr159–Asn185. The segment covering Leu26 to Val37 has biased composition (pro residues). Residues Asn162–Pro173 are compositionally biased toward low complexity. In terms of domain architecture, PAZ spans Pro292–Pro408. The 309-residue stretch at Phe577–Lys885 folds into the Piwi domain. The Nuclear localization signal signature appears at Asp584–Tyr591.

Belongs to the argonaute family. Ago subfamily. As to quaternary structure, interacts with NRPE1 (via C-terminus). Binding to NRPE1 is required for its function in RdDM. Interacts with turnip crinkle virus (TCV) capsid protein P38; this interaction inhibits probably RNA silencing ability of AGO4. Interacts with SDE3. Binds to RDM3. Binds chromatin at loci subject to transcriptional silencing. Interacts with MBD6. In terms of tissue distribution, expressed in embryos, mature leaves, vascular tissue of the sepals, stamens and stigma, at the tip of the style and siliques.

The protein resides in the nucleus. It localises to the nucleolus. Its subcellular location is the nucleoplasm. The protein localises to the cajal body. Together with RDM3, required for transcriptional gene silencing (TGS) by DNA methylation and repressive histone modifications (H3K9me2) of several chromatin loci. Component of the RISC complex that associate with the small interfering RNA (siRNA) pathway involved in direct cytosine methylation at endogenous DNA repeats. Forms a AGO4/NRPE1/siRNA complex in cajal body, facilitating its function in RNA-directed gene silencing of target loci. Required for CpNpG and asymmetric DNA methylation as well as histone H3 'Lys-9' methylation (H3K9me) at SUP and SN1 loci. May be not required for CpG methylation. Required for the production and maintenance of retrotransposon SN1 and Copia and ribosomal 5S 25 nucleotide siRNAs specialized in gene silencing at chromatin level. Involved in de novo methylation of FWA gene and required for the maintenance of RNA-directed DNA methylation (RdDM) triggered by inverted repeat transgenes. Interacts with miRNA miR390 and miR172, targeting respectively TAS3 and AP2 mRNAs, and mediates cleavage of miRNA targets. Associates mainly with small RNAs of 24 nucleotide in length and preferentially recruits small RNAs with a 5' terminal adenosine. Targeted by the turnip yellows virus (TuYV) protein P0 (via F-box-like domain) for probable proteasome degradation and thereby inactivating AGO4 function in RNA silencing. Required for resistance to the bacterial pathogen P.syringae. Works independently of the RdDM pathway in mediating resistance to P.syringae. RdDM is involved in viral genome methylation as an epigenetic defense against geminiviruses. This is Protein argonaute 4 from Arabidopsis thaliana (Mouse-ear cress).